Reading from the N-terminus, the 432-residue chain is Tol-Pal system protein TolB (432 aa).

Positions 1–21 (MKKVIYTIVGFVFMWSTSVYA) are cleaved as a signal peptide.

This sequence belongs to the TolB family. The Tol-Pal system is composed of five core proteins: the inner membrane proteins TolA, TolQ and TolR, the periplasmic protein TolB and the outer membrane protein Pal. They form a network linking the inner and outer membranes and the peptidoglycan layer.

Its subcellular location is the periplasm. Functionally, part of the Tol-Pal system, which plays a role in outer membrane invagination during cell division and is important for maintaining outer membrane integrity. This chain is Tol-Pal system protein TolB, found in Hydrogenovibrio crunogenus (strain DSM 25203 / XCL-2) (Thiomicrospira crunogena).